We begin with the raw amino-acid sequence, 484 residues long: Suppressor of fused homolog (484 aa).

Positions 1-24 are disordered; the sequence is MAELRPSGAPGPTAPPAPGPTAPP. A compositionally biased stretch (pro residues) spans 12–23; sequence PTAPPAPGPTAP. Lysine 257 is covalently cross-linked (Glycyl lysine isopeptide (Lys-Gly) (interchain with G-Cter in ubiquitin)). Positions 279 to 360 are disordered; sequence SRPPEDDEDS…SSTAIIPHEL (82 aa). Serine 301 is modified (phosphoserine). Lysine 303 carries the N6-acetyllysine modification. Lysine 321 participates in a covalent cross-link: Glycyl lysine isopeptide (Lys-Gly) (interchain with G-Cter in SUMO2). The segment covering 336–347 has biased composition (basic and acidic residues); that stretch reads AHDRAPSRKDSL. Residues serine 342, serine 346, and serine 352 each carry the phosphoserine modification. A Phosphothreonine modification is found at threonine 353. Residue serine 481 is modified to Phosphoserine.

The protein belongs to the SUFU family. As to quaternary structure, may form homodimers. Part of a DNA-bound corepressor complex containing SAP18, GLI1 and SIN3. Part of a complex containing CTNNB1. Binds BTRC, GLI2, GLI3, SAP18 and STK36. Binds both free and DNA-bound GLI1. Interacts with KIF7. Interacts with GLI3FL and this interaction regulates the formation of either repressor or activator forms of GLI3. Its association with GLI3FL is regulated by Hh signaling and dissociation of the SUFU-GLI3 interaction requires the presence of the ciliary motor KIF3A. Interacts with ULK3; inactivating the protein kinase activity of ULK3. Interacts with RAB23. Polyubiquitinated at Lys-257 by the SCF(FBXL17) complex, leading to its subsequent degradation and allowing the release of GLI1 for proper hedgehog/smoothened signal transduction. Ubiquitination is impaired by phosphorylation at Ser-342, Ser-346, Ser-352 and Thr-353. Post-translationally, phosphorylation at Ser-342, Ser-346, Ser-352 and Thr-353 prevents ubiquitination by the SCF(FBXL17) complex. Ubiquitous in adult tissues. Detected in osteoblasts of the perichondrium in the developing limb of 12-week old embryos. Isoform 1 is detected in fetal brain, lung, kidney and testis. Isoform 2 is detected in fetal testis, and at much lower levels in fetal brain, lung and kidney.

The protein resides in the cytoplasm. Its subcellular location is the nucleus. In terms of biological role, negative regulator in the hedgehog/smoothened signaling pathway. Down-regulates GLI1-mediated transactivation of target genes. Down-regulates GLI2-mediated transactivation of target genes. Part of a corepressor complex that acts on DNA-bound GLI1. May also act by linking GLI1 to BTRC and thereby targeting GLI1 to degradation by the proteasome. Sequesters GLI1, GLI2 and GLI3 in the cytoplasm, this effect is overcome by binding of STK36 to both SUFU and a GLI protein. Negative regulator of beta-catenin signaling. Regulates the formation of either the repressor form (GLI3R) or the activator form (GLI3A) of the full-length form of GLI3 (GLI3FL). GLI3FL is complexed with SUFU in the cytoplasm and is maintained in a neutral state. Without the Hh signal, the SUFU-GLI3 complex is recruited to cilia, leading to the efficient processing of GLI3FL into GLI3R. When Hh signaling is initiated, SUFU dissociates from GLI3FL and the latter translocates to the nucleus, where it is phosphorylated, destabilized, and converted to a transcriptional activator (GLI3A). Required for normal embryonic development. Required for the proper formation of hair follicles and the control of epidermal differentiation. In Homo sapiens (Human), this protein is Suppressor of fused homolog.